The primary structure comprises 89 residues: Small ribosomal subunit protein uS15 (89 aa).

The protein belongs to the universal ribosomal protein uS15 family. In terms of assembly, part of the 30S ribosomal subunit. Forms a bridge to the 50S subunit in the 70S ribosome, contacting the 23S rRNA.

One of the primary rRNA binding proteins, it binds directly to 16S rRNA where it helps nucleate assembly of the platform of the 30S subunit by binding and bridging several RNA helices of the 16S rRNA. Its function is as follows. Forms an intersubunit bridge (bridge B4) with the 23S rRNA of the 50S subunit in the ribosome. This Baumannia cicadellinicola subsp. Homalodisca coagulata protein is Small ribosomal subunit protein uS15.